The sequence spans 152 residues: UPF0266 membrane protein YobD (152 aa).

3 helical membrane-spanning segments follow: residues 6–26, 45–65, and 67–87; these read LVLI…QFIM, IDSV…VTNH, and ALIT…IFWI.

It belongs to the UPF0266 family.

It localises to the cell inner membrane. This Escherichia coli O157:H7 (strain EC4115 / EHEC) protein is UPF0266 membrane protein YobD.